The chain runs to 756 residues: 5-methyltetrahydropteroyltriglutamate--homocysteine methyltransferase (756 aa).

5-methyltetrahydropteroyltri-L-glutamate is bound by residues 15–18 (REWK) and Lys111. Residues 392–411 (GAATSHNLENKKRPQSFNER) form a disordered region. The segment covering 399–411 (LENKKRPQSFNER) has biased composition (basic and acidic residues). Residues 429-431 (IGS) and Glu482 contribute to the L-homocysteine site. L-methionine is bound by residues 429–431 (IGS) and Glu482. 5-methyltetrahydropteroyltri-L-glutamate-binding positions include 513–514 (RC) and Trp559. Residue Asp597 participates in L-homocysteine binding. Asp597 lines the L-methionine pocket. Glu603 contributes to the 5-methyltetrahydropteroyltri-L-glutamate binding site. Residues His639, Cys641, and Glu663 each contribute to the Zn(2+) site. His692 serves as the catalytic Proton donor. Cys724 provides a ligand contact to Zn(2+).

The protein belongs to the vitamin-B12 independent methionine synthase family. It depends on Zn(2+) as a cofactor.

It catalyses the reaction 5-methyltetrahydropteroyltri-L-glutamate + L-homocysteine = tetrahydropteroyltri-L-glutamate + L-methionine. The protein operates within amino-acid biosynthesis; L-methionine biosynthesis via de novo pathway; L-methionine from L-homocysteine (MetE route): step 1/1. Its function is as follows. Catalyzes the transfer of a methyl group from 5-methyltetrahydrofolate to homocysteine resulting in methionine formation. This chain is 5-methyltetrahydropteroyltriglutamate--homocysteine methyltransferase, found in Halalkalibacterium halodurans (strain ATCC BAA-125 / DSM 18197 / FERM 7344 / JCM 9153 / C-125) (Bacillus halodurans).